A 475-amino-acid chain; its full sequence is Putative aldehyde dehydrogenase SERP1729 (475 aa).

201–207 is a binding site for NAD(+); sequence GDGSGVG. Catalysis depends on residues Glu-245 and Cys-279.

This sequence belongs to the aldehyde dehydrogenase family.

It carries out the reaction an aldehyde + NAD(+) + H2O = a carboxylate + NADH + 2 H(+). This Staphylococcus epidermidis (strain ATCC 35984 / DSM 28319 / BCRC 17069 / CCUG 31568 / BM 3577 / RP62A) protein is Putative aldehyde dehydrogenase SERP1729.